Reading from the N-terminus, the 274-residue chain is ATP synthase subunit b 2 (274 aa).

The chain crosses the membrane as a helical span at residues 2–22 (HIDWFVLLAQLVNFLILIYLL).

It belongs to the ATPase B chain family. As to quaternary structure, F-type ATPases have 2 components, F(1) - the catalytic core - and F(0) - the membrane proton channel. F(1) has five subunits: alpha(3), beta(3), gamma(1), delta(1), epsilon(1). F(0) has three main subunits: a(1), b(2) and c(10-14). The alpha and beta chains form an alternating ring which encloses part of the gamma chain. F(1) is attached to F(0) by a central stalk formed by the gamma and epsilon chains, while a peripheral stalk is formed by the delta and b chains.

The protein localises to the cell inner membrane. F(1)F(0) ATP synthase produces ATP from ADP in the presence of a proton or sodium gradient. F-type ATPases consist of two structural domains, F(1) containing the extramembraneous catalytic core and F(0) containing the membrane proton channel, linked together by a central stalk and a peripheral stalk. During catalysis, ATP synthesis in the catalytic domain of F(1) is coupled via a rotary mechanism of the central stalk subunits to proton translocation. Functionally, component of the F(0) channel, it forms part of the peripheral stalk, linking F(1) to F(0). In Syntrophus aciditrophicus (strain SB), this protein is ATP synthase subunit b 2.